The sequence spans 249 residues: MAAARKDAGVLALFDVDGTLTAPRKEVTPEMLEFMKRLRENVTVGVVGGSDLVKISEQLGKSVITDYDYVFSENGLVAHKDGKLIGTQSLKTYLGDDQLKEFINFTLHYIADLDIPIKRGTFIEFRSGMINVSPIGRNCSQEERDDFEKYDKVHNVRPKMVSVLREKFAHLNLTFSIGGQISFDVFPQGWDKTYCLRYLEEFKEIHFFGDKTYKGGNDHEIFESDRTVGHTVTSPNDTVQQCKSIFLSE.

Asp-15 acts as the Nucleophile in catalysis. Mg(2+)-binding residues include Asp-15 and Asp-17. Asp-17 (proton donor/acceptor) is an active-site residue. Alpha-D-mannose 1-phosphate is bound by residues Arg-24, Arg-126, Arg-137, Arg-144, Ser-182, and Asp-184. 3 residues coordinate Mg(2+): Asp-210, Phe-222, and Thr-227.

This sequence belongs to the eukaryotic PMM family. Homodimer. Mg(2+) serves as cofactor. As to expression, expressed in roots, leaves, flag leaves and immature spikes.

It is found in the cytoplasm. It carries out the reaction alpha-D-mannose 1-phosphate = D-mannose 6-phosphate. Its pathway is nucleotide-sugar biosynthesis; GDP-alpha-D-mannose biosynthesis; alpha-D-mannose 1-phosphate from D-fructose 6-phosphate: step 2/2. Its function is as follows. Catalyzes the interconversion of mannose-6-phosphate to mannose-1-phosphate, the precursor for the synthesis of GDP-mannose. GDP-mannose is an essential sugar nucleotide for the synthesis of D-mannose-containing cell wall polysaccharides (galactomannans and glucomannans), glycolipids, glycoproteins and the antioxidant L-ascorbate. Can complement the yeast temperature-sensitive mutant sec53-6. This Triticum aestivum (Wheat) protein is Phosphomannomutase.